The primary structure comprises 424 residues: Dihydroorotase-like protein (424 aa).

The protein belongs to the metallo-dependent hydrolases superfamily. DHOase family. PyrC' subfamily. In terms of assembly, heterododecamer of 6 active PyrB subunits and 6 non-catalytic PyrC' subunits.

Its function is as follows. Non-functional DHOase. The protein is Dihydroorotase-like protein of Pseudomonas putida (Arthrobacter siderocapsulatus).